Reading from the N-terminus, the 329-residue chain is Phenylalanine--tRNA ligase alpha subunit (329 aa).

Residue E254 coordinates Mg(2+).

Belongs to the class-II aminoacyl-tRNA synthetase family. Phe-tRNA synthetase alpha subunit type 1 subfamily. In terms of assembly, tetramer of two alpha and two beta subunits. Mg(2+) is required as a cofactor.

The protein resides in the cytoplasm. The catalysed reaction is tRNA(Phe) + L-phenylalanine + ATP = L-phenylalanyl-tRNA(Phe) + AMP + diphosphate + H(+). The protein is Phenylalanine--tRNA ligase alpha subunit of Haemophilus influenzae (strain 86-028NP).